We begin with the raw amino-acid sequence, 333 residues long: Leucine carboxyl methyltransferase 1 (333 aa).

S-adenosyl-L-methionine contacts are provided by residues K42, R82, G107, D131, 181–182 (DL), and E208.

The protein belongs to the methyltransferase superfamily. LCMT family.

It catalyses the reaction [phosphatase 2A protein]-C-terminal L-leucine + S-adenosyl-L-methionine = [phosphatase 2A protein]-C-terminal L-leucine methyl ester + S-adenosyl-L-homocysteine. In terms of biological role, methylates the carboxyl group of the C-terminal leucine residue of protein phosphatase 2A catalytic subunits to form alpha-leucine ester residues. This chain is Leucine carboxyl methyltransferase 1, found in Caenorhabditis elegans.